The following is a 422-amino-acid chain: UPF0761 membrane protein LHK_02978 (422 aa).

Helical transmembrane passes span 44-64, 102-122, 141-161, 178-198, 212-232, and 246-266; these read LLSL…FPVF, LTAV…LTID, MLVY…GISG, LAGI…LTVL, ALIG…GFGL, and AFAT…TVLI.

This sequence belongs to the UPF0761 family.

The protein localises to the cell inner membrane. This chain is UPF0761 membrane protein LHK_02978, found in Laribacter hongkongensis (strain HLHK9).